Reading from the N-terminus, the 239-residue chain is Heptaprenylglyceryl phosphate synthase (239 aa).

Lys-12 serves as a coordination point for sn-glycerol 1-phosphate. Residues Asp-14 and Thr-40 each contribute to the Mg(2+) site. Sn-glycerol 1-phosphate-binding positions include 159–164, Gly-189, and 209–210; these read YLEYSG and GN.

The protein belongs to the GGGP/HepGP synthase family. Group I subfamily. In terms of assembly, homodimer. The cofactor is Mg(2+).

It carries out the reaction sn-glycerol 1-phosphate + all-trans-heptaprenyl diphosphate = 3-heptaprenyl-sn-glycero-1-phosphate + diphosphate. Its pathway is membrane lipid metabolism; glycerophospholipid metabolism. In terms of biological role, prenyltransferase that catalyzes in vivo the transfer of the heptaprenyl moiety of heptaprenyl pyrophosphate (HepPP; 35 carbon atoms) to the C3 hydroxyl of sn-glycerol-1-phosphate (G1P), producing heptaprenylglyceryl phosphate (HepGP). This reaction is an ether-bond-formation step in the biosynthesis of archaea-type G1P-based membrane lipids found in Bacillales. To a much lesser extent, is also able to use geranylgeranyl diphosphate (GGPP; C20) as the prenyl donor. The polypeptide is Heptaprenylglyceryl phosphate synthase (Geobacillus kaustophilus (strain HTA426)).